The primary structure comprises 439 residues: Rho GTPase-activating protein 1 (439 aa).

M1 carries the post-translational modification N-acetylmethionine. The segment covering 28-48 has biased composition (basic and acidic residues); sequence IDEKNWPSDEMPDFPKSDDSK. The disordered stretch occupies residues 28-55; sequence IDEKNWPSDEMPDFPKSDDSKSSSPEPV. 4 positions are modified to phosphoserine: S44, S47, S50, and S51. In terms of domain architecture, CRAL-TRIO spans 63 to 218; it reads PYYDIARHQI…QVLKYDDFLK (156 aa). Position 65 is a phosphotyrosine (Y65). K80 is modified (N6-acetyllysine). Positions 228-238 match the SH3-binding motif; it reads PKPMPPRPPLP. In terms of domain architecture, Rho-GAP spans 244–431; sequence VSLQHLQEKS…FLLDHQGELF (188 aa).

As to quaternary structure, found in a complex with XPO7, EIF4A1, ARHGAP1, VPS26A, VPS29, VPS35 and SFN. Interacts with BNIPL.

The protein localises to the cytoplasm. Its function is as follows. GTPase activator for the Rho, Rac and Cdc42 proteins, converting them to the putatively inactive GDP-bound state. Cdc42 seems to be the preferred substrate. This chain is Rho GTPase-activating protein 1 (Arhgap1), found in Mus musculus (Mouse).